Reading from the N-terminus, the 381-residue chain is Protein TRIGALACTOSYLDIACYLGLYCEROL 2, chloroplastic (381 aa).

The N-terminal 45 residues, 1 to 45 (MIGNPVIQVPSSLMPSSSMIACPRVSPNGVPYLPPKPRTRHLVVR), are a transit peptide targeting the chloroplast. Topologically, residues 46-96 (AASNSDAAHGQPSSDGGKNPLTVVLDVPRNIWRQTLKPLSDFGFGKRSIWE) are stromal. The helical transmembrane segment at 97 to 117 (GGVGLFIVSGATLLALSWAWL) threads the bilayer. Topologically, residues 118 to 381 (RGFQMRSKFR…LLIKSLSRLL (264 aa)) are chloroplast intermembrane.

As to quaternary structure, homomultimer. Substrate-binding subunit of the TGD complex, a lipid translocator at the inner chloroplast envelope membrane made of TGD1, TGD2 and TGD3. Interacts with TGD1 and TGD3 with an overall subunit stoichiometry of 2 TGD1, 2 TGD3 and 8 to 12 TGD2. Interacts with TGD5.

The protein resides in the plastid. Its subcellular location is the chloroplast inner membrane. In terms of biological role, component of a phosphatidic acid/lipid transport complex in the chloroplast envelope. Specifically binds phosphatidic acid (PA). Involved in lipid transfer from the endoplasmic reticulum (ER) to plastids, and necessary for thylakoids formation. The chain is Protein TRIGALACTOSYLDIACYLGLYCEROL 2, chloroplastic from Arabidopsis thaliana (Mouse-ear cress).